The chain runs to 212 residues: Pyrrolidone-carboxylate peptidase (212 aa).

Residues E80, C143, and H165 contribute to the active site.

It belongs to the peptidase C15 family. Homotetramer.

It localises to the cytoplasm. It catalyses the reaction Release of an N-terminal pyroglutamyl group from a polypeptide, the second amino acid generally not being Pro.. In terms of biological role, removes 5-oxoproline from various penultimate amino acid residues except L-proline. This chain is Pyrrolidone-carboxylate peptidase, found in Vibrio vulnificus (strain YJ016).